Reading from the N-terminus, the 1149-residue chain is Protein deacetylase HDAC6 (1149 aa).

The segment at 1 to 61 (MTSTGQDSST…KGKMKKLSQP (61 aa)) is disordered. The span at 18–29 (NPQSPLQESSAT) shows a compositional bias: polar residues. A Phosphoserine modification is found at S21. An Omega-N-methylarginine modification is found at R32. At S43 the chain carries Phosphoserine. A Nuclear export signal motif is present at residues 66-75 (LVVGLQGLDL). Histone deacetylase stretches follow at residues 87–403 (LVFD…TLLG) and 481–799 (GLVY…SLLG). The active-site 1 is H215. H610 functions as the 2 in the catalytic mechanism. The interval 954–975 (ALGETEPTPPASHTNKQTTGAS) is disordered. Phosphothreonine occurs at positions 958, 961, 967, and 971. Positions 964–975 (ASHTNKQTTGAS) are enriched in polar residues. S975 is modified (phosphoserine). The segment at 1045–1143 (SWCPHLMAVC…NAAHQNKFGE (99 aa)) adopts a UBP-type zinc-finger fold. Residues C1047, H1049, C1067, C1070, C1079, C1082, and C1087 each coordinate Zn(2+). The tract at residues 1088 to 1090 (SRY) is ubiquitin binding. Zn(2+) contacts are provided by H1094, H1098, H1104, C1117, and C1120. The interval 1116 to 1123 (WCYVCQAY) is ubiquitin binding. S1148 is modified (phosphoserine).

Belongs to the histone deacetylase family. HD type 2 subfamily. In terms of assembly, forms a trimeric complex in the nucleus consisting of BANP, HDAC6 and KHDRBS1/SAM68; HDAC6 keeps KHDRBS1 in a deacetylated state which inhibits the inclusion of CD44 alternate exons. The complex is disrupted by MAPK1/MAPK3-mediated phosphorylation of BANP which results in BANP export to the cytoplasm. This facilitates acetylation of KHDRBS1 and CD44 variant exon inclusion. Interacts with SIRT2 (via both phosphorylated, unphosphorylated, active or inactive forms); the interaction is necessary for the complex to interact with alpha-tubulin. Under proteasome impairment conditions, interacts with UBD via its histone deacetylase 1 and UBP-type zinc-finger regions. Interacts with BBIP1, CBFA2T3, CYLD, DDIT3/CHOP, ZMYND15, F-actin and HDAC11. Interacts with RIPOR2; this interaction occurs during early myogenic differentiation and prevents HDAC6 to deacetylate tubulin. Interacts with AURKA; AURKA-mediated phosphorylation of HDAC6 promotes deacetylation of alpha-tubulin. Interacts with DYSF; this interaction occurs during early myogenic differentiation. Interacts with TPPP; inhibiting the tubulin deacetylase activity of HDAC6. Interacts with DYNLL1. Interacts with ATP13A2; the interaction results in recruitment of HDAC6 to lysosomes to promote CTTN deacetylation. Interacts with CCDC141 (via the N-terminal region); inhibiting the deacetylase activity of HDAC6. Interacts with IPO7; the interaction facilitates HDAC6 nuclear translocation in dental papilla cells. Requires Zn(2+) as cofactor. Post-translationally, phosphorylated by AURKA; phosphorylation increases HDAC6-mediated deacetylation of alpha-tubulin and subsequent disassembly of cilia. Ubiquitinated. Its polyubiquitination however does not lead to its degradation. In terms of processing, sumoylated in vitro. As to expression, expressed in neurons of the cortex. Expressed in Purkinje cells. Detected in keratinocytes (at protein level).

The protein localises to the cytoplasm. It is found in the cytoskeleton. Its subcellular location is the nucleus. It localises to the perikaryon. The protein resides in the cell projection. The protein localises to the dendrite. It is found in the axon. Its subcellular location is the cilium. It localises to the microtubule organizing center. The protein resides in the centrosome. The protein localises to the cilium basal body. The enzyme catalyses N(6)-acetyl-L-lysyl-[protein] + H2O = L-lysyl-[protein] + acetate. The catalysed reaction is N(6)-acetyl-L-lysyl-[alpha-tubulin] + H2O = L-lysyl-[alpha-tubulin] + acetate. It participates in protein modification; protein ubiquitination. Functionally, deacetylates a wide range of non-histone substrates. Plays a central role in microtubule-dependent cell motility by mediating deacetylation of tubulin. Required for cilia disassembly via deacetylation of alpha-tubulin. Alpha-tubulin deacetylation results in destabilization of dynamic microtubules. Promotes deacetylation of CTTN, leading to actin polymerization, promotion of autophagosome-lysosome fusion and completion of autophagy. Deacetylates SQSTM1. Deacetylates peroxiredoxins PRDX1 and PRDX2, decreasing their reducing activity. Deacetylates antiviral protein RIGI in the presence of viral mRNAs which is required for viral RNA detection by RIGI. Sequentially deacetylates and polyubiquitinates DNA mismatch repair protein MSH2 which leads to MSH2 degradation, reducing cellular sensitivity to DNA-damaging agents and decreasing cellular DNA mismatch repair activities. Deacetylates DNA mismatch repair protein MLH1 which prevents recruitment of the MutL alpha complex (formed by the MLH1-PMS2 heterodimer) to the MutS alpha complex (formed by the MSH2-MSH6 heterodimer), leading to tolerance of DNA damage. Deacetylates RHOT1/MIRO1 which blocks mitochondrial transport and mediates axon growth inhibition. Deacetylates transcription factor SP1 which leads to increased expression of ENG, positively regulating angiogenesis. Deacetylates KHDRBS1/SAM68 which regulates alternative splicing by inhibiting the inclusion of CD44 alternate exons. Promotes odontoblast differentiation following IPO7-mediated nuclear import and subsequent repression of RUNX2 expression. In addition to its protein deacetylase activity, plays a key role in the degradation of misfolded proteins: when misfolded proteins are too abundant to be degraded by the chaperone refolding system and the ubiquitin-proteasome, mediates the transport of misfolded proteins to a cytoplasmic juxtanuclear structure called aggresome. Probably acts as an adapter that recognizes polyubiquitinated misfolded proteins and target them to the aggresome, facilitating their clearance by autophagy. This Mus musculus (Mouse) protein is Protein deacetylase HDAC6.